A 139-amino-acid chain; its full sequence is Drosulfakinins (139 aa).

Residues 1–35 (MGHRGMGCAHFATMAMPLWALTFYLLVVLPVPSQT) form the signal peptide. Residues 36–71 (ASVEVGKEERRLQDLDPKMGSEAGNTDGLSLARFGS) constitute a propeptide that is removed on maturation. Phenylalanine amide is present on phenylalanine 80. Positions 81-109 (GHRVPIISRPVIPIELDLLMDNEDDRTMS) are excised as a propeptide. Tyrosine 115 carries the post-translational modification Sulfotyrosine. At phenylalanine 120 the chain carries Phenylalanine amide. Tyrosine 132 carries the post-translational modification Sulfotyrosine. A Phenylalanine amide modification is found at phenylalanine 137.

Belongs to the gastrin/cholecystokinin family.

The protein localises to the secreted. In terms of biological role, drosulfakinin-0 (DSK 0) plays diverse biological roles including regulating gut muscle contraction in adults but not in larvae. The sequence is that of Drosulfakinins from Drosophila pseudoobscura pseudoobscura (Fruit fly).